The following is a 382-amino-acid chain: Prostaglandin D2 receptor 2 (382 aa).

At 1–32 (MANVTLKPLCPLLEEMVQLPNHSNSSLRYIDH) the chain is on the extracellular side. N-linked (GlcNAc...) asparagine glycans are attached at residues Asn3, Asn21, and Asn24. The chain crosses the membrane as a helical span at residues 33-55 (VSVLLHGLASLLGLVENGLILFV). Residues 56–66 (VGCRMRQTVVT) lie on the Cytoplasmic side of the membrane. A helical membrane pass occupies residues 67 to 88 (TWVLHLALSDLLAAASLPFFTY). The Extracellular portion of the chain corresponds to 89–105 (FLAVGHSWELGTTFCKL). A disulfide bridge links Cys103 with Cys181. The helical transmembrane segment at 106-126 (HSSVFFLNMFASGFLLSAISL) threads the bilayer. Residues 127–145 (DRCLQVVRPVWAQNHRTVA) are Cytoplasmic-facing. The helical transmembrane segment at 146-167 (VAHRVCLMLWALAVLNTIPYFV) threads the bilayer. The Extracellular portion of the chain corresponds to 168 to 209 (FRDTIPRLDGRIMCYYNLLLWNPGPDRDTTCDYRQKALAVSK). The chain crosses the membrane as a helical span at residues 210–230 (FLLAFMVPLAIIASSHVAVSL). Residues 231-246 (RLHHRGRQRTGRFVRL) lie on the Cytoplasmic side of the membrane. A helical transmembrane segment spans residues 247–268 (VAAIVVAFVLCWGPYHIFSLLE). The Extracellular portion of the chain corresponds to 269–287 (ARAHSVTTLRQLASRGLPF). A helical membrane pass occupies residues 288–307 (VTSLAFFNSVVNPLLYVFTC). Residues 308–357 (PDMLYKLRRSLRAVLESVLVEDSDQSGGLRNRRRRASSTATPASTLLLAD) lie on the Cytoplasmic side of the membrane. Positions 329–332 (DSDQ) match the Involved in the recycling of CRTH2 motif. Phosphoserine is present on residues Ser330 and Ser344.

It belongs to the G-protein coupled receptor 1 family. In terms of processing, phosphorylated.

Its subcellular location is the cell membrane. In terms of biological role, receptor for prostaglandin D2 (PGD2). Coupled to the G(i)-protein. Receptor activation may result in pertussis toxin-sensitive decreases in cAMP levels and Ca(2+) mobilization. PI3K signaling is also implicated in mediating PTGDR2 effects. PGD2 induced receptor internalization. CRTH2 internalization can be regulated by diverse kinases such as, PKC, PKA, GRK2, GPRK5/GRK5 and GRK6. Receptor activation is responsible, at least in part, in immune regulation and allergic/inflammation responses. The polypeptide is Prostaglandin D2 receptor 2 (Ptgdr2) (Mus musculus (Mouse)).